The primary structure comprises 543 residues: Chaperonin GroEL (543 aa).

ATP is bound by residues 30–33 (TLGP), K51, 87–91 (DGTTT), G415, 480–482 (NAL), and D496.

It belongs to the chaperonin (HSP60) family. Forms a cylinder of 14 subunits composed of two heptameric rings stacked back-to-back. Interacts with the co-chaperonin GroES.

The protein resides in the cytoplasm. The catalysed reaction is ATP + H2O + a folded polypeptide = ADP + phosphate + an unfolded polypeptide.. Functionally, together with its co-chaperonin GroES, plays an essential role in assisting protein folding. The GroEL-GroES system forms a nano-cage that allows encapsulation of the non-native substrate proteins and provides a physical environment optimized to promote and accelerate protein folding. The protein is Chaperonin GroEL of Gemmatimonas aurantiaca (strain DSM 14586 / JCM 11422 / NBRC 100505 / T-27).